We begin with the raw amino-acid sequence, 4115 residues long: Transcription-associated protein 1 (4115 aa).

The span at 1–11 shows a compositional bias: polar residues; sequence MDPSIPSTSHR. Disordered regions lie at residues 1 to 21 and 543 to 563; these read MDPS…GVQP and ESEQ…KKTS. Residues 544–563 show a composition bias toward basic and acidic residues; that stretch reads SEQKRNELPTPTKEHTKKTS. 2 TPR repeats span residues 1341 to 1374 and 1820 to 1853; these read LDGL…LLDL and QDYD…EVIP. The tract at residues 2678-2701 is disordered; it reads LEEPEPMEVDQPKNAPAEEPKDNK. The FAT domain maps to 2808 to 3421; it reads LIEFISSKHE…SNGASKVSKS (614 aa). The stretch at 2855–2888 is one TPR 3 repeat; that stretch reads IETLESLGALYKELAEFDQYSAIWERRSVFPETM. A PI3K/PI4K catalytic domain is found at 3740–4100; it reads EPYFEIVMRG…CNSLIIRAKD (361 aa). Positions 3746–3752 are G-loop; that stretch reads VMRGGQV. Residues 3959–3967 are catalytic loop; the sequence is NLSPMTPHQ. Residues 3979-4006 form an activation loop region; that stretch reads NPFYRFELGTGQLMDIEHFAHEVPFRLT. Positions 4083 to 4115 constitute an FATC domain; the sequence is DAKVKKDDCNSLIIRAKDSDNLSRMPPTYHAWF.

Belongs to the PI3/PI4-kinase family. TRA1 subfamily.

The protein resides in the nucleus. Functionally, influences germ cell fate in hermaphrodites. Acts downstream of tra-2 and tra-3 and through the Tip60 histone acetyltransferase complex to regulate germ cell fate decisions. Required for spermatogenesis and embryonic development. Acts with tra-2 to promote expression of fog-3 and control male tail development. Involved in the negative regulation of vulval development. The sequence is that of Transcription-associated protein 1 from Caenorhabditis briggsae.